The following is a 269-amino-acid chain: Phosphonoacetaldehyde hydrolase (269 aa).

Asp-9 acts as the Nucleophile in catalysis. Asp-9 and Ala-11 together coordinate Mg(2+). The Schiff-base intermediate with substrate role is filled by Lys-50. Asp-184 is a binding site for Mg(2+).

The protein belongs to the HAD-like hydrolase superfamily. PhnX family. In terms of assembly, homodimer. Requires Mg(2+) as cofactor.

The catalysed reaction is phosphonoacetaldehyde + H2O = acetaldehyde + phosphate + H(+). Functionally, involved in phosphonate degradation. This Lysinibacillus sphaericus (strain C3-41) protein is Phosphonoacetaldehyde hydrolase.